The primary structure comprises 436 residues: Probable 4-aminobutyrate aminotransferase (436 aa).

An N6-(pyridoxal phosphate)lysine modification is found at Lys281.

This sequence belongs to the class-III pyridoxal-phosphate-dependent aminotransferase family. Pyridoxal 5'-phosphate is required as a cofactor.

It catalyses the reaction 4-aminobutanoate + 2-oxoglutarate = succinate semialdehyde + L-glutamate. The enzyme catalyses (S)-3-amino-2-methylpropanoate + 2-oxoglutarate = 2-methyl-3-oxopropanoate + L-glutamate. Its pathway is amino-acid degradation; 4-aminobutanoate degradation. This is Probable 4-aminobutyrate aminotransferase (gabT) from Bacillus subtilis (strain 168).